Here is a 194-residue protein sequence, read N- to C-terminus: Large ribosomal subunit protein uL5 (194 aa).

The protein belongs to the universal ribosomal protein uL5 family. Part of the 50S ribosomal subunit; part of the 5S rRNA/L5/L18/L25 subcomplex. Contacts the 5S rRNA and the P site tRNA. Forms a bridge to the 30S subunit in the 70S ribosome.

This is one of the proteins that bind and probably mediate the attachment of the 5S RNA into the large ribosomal subunit, where it forms part of the central protuberance. In the 70S ribosome it contacts protein S13 of the 30S subunit (bridge B1b), connecting the 2 subunits; this bridge is implicated in subunit movement. Contacts the P site tRNA; the 5S rRNA and some of its associated proteins might help stabilize positioning of ribosome-bound tRNAs. The sequence is that of Large ribosomal subunit protein uL5 from Frankia alni (strain DSM 45986 / CECT 9034 / ACN14a).